The primary structure comprises 203 residues: SPbeta prophage-derived uncharacterized protein YouA (203 aa).

A disordered region spans residues 1 to 23 (MAFLNQDGDKYTSAKDDGTGNPI). A compositionally biased stretch (basic and acidic residues) spans 7-18 (DGDKYTSAKDDG).

The chain is SPbeta prophage-derived uncharacterized protein YouA (youA) from Bacillus subtilis (strain 168).